A 137-amino-acid chain; its full sequence is Prefoldin subunit alpha (137 aa).

This sequence belongs to the prefoldin subunit alpha family. In terms of assembly, heterohexamer of two alpha and four beta subunits.

It is found in the cytoplasm. Molecular chaperone capable of stabilizing a range of proteins. Seems to fulfill an ATP-independent, HSP70-like function in archaeal de novo protein folding. The chain is Prefoldin subunit alpha (pfdA) from Archaeoglobus fulgidus (strain ATCC 49558 / DSM 4304 / JCM 9628 / NBRC 100126 / VC-16).